A 367-amino-acid chain; its full sequence is Zinc transport system membrane protein TroD (367 aa).

9 helical membrane-spanning segments follow: residues 5–25 (VVLI…FLVL), 28–48 (ISLM…LGYF), 56–76 (FVPF…AELL), 87–107 (AVGL…SLYA), 140–160 (SLVQ…LFFK), 170–190 (VLAT…MLAV), 201–221 (VGAV…LLLT), 224–244 (LLLM…SGLF), and 251–271 (GSIA…VYLF).

It belongs to the ABC-3 integral membrane protein family.

Its subcellular location is the cell membrane. Its function is as follows. Part of an ATP-driven transport system TroABCD for zinc. This chain is Zinc transport system membrane protein TroD (troD), found in Treponema pallidum (strain Nichols).